The following is a 316-amino-acid chain: Sideroflexin-4 (316 aa).

A run of 5 helical transmembrane segments spans residues 83–103, 141–161, 174–194, 230–250, and 263–283; these read QVFLPISAPLVVGSLIAHKGI, LLILGAVSYSTVTGALPQIIL, ICRSFLPVPLAAGLAAFNILV, ISRATLFGTTAALPTFLMALL, and IAPIGSMCTVITFGLMIPVSF.

The protein belongs to the sideroflexin family.

Its subcellular location is the mitochondrion inner membrane. In terms of biological role, mitochondrial amino-acid transporter. Does not act as a serine transporter: not able to mediate transport of serine into mitochondria. This chain is Sideroflexin-4, found in Danio rerio (Zebrafish).